A 509-amino-acid polypeptide reads, in one-letter code: Maturase K (509 aa).

Belongs to the intron maturase 2 family. MatK subfamily.

It is found in the plastid. The protein resides in the chloroplast. Usually encoded in the trnK tRNA gene intron. Probably assists in splicing its own and other chloroplast group II introns. In Galbulimima belgraveana (Northern pigeonberry ash), this protein is Maturase K.